A 264-amino-acid chain; its full sequence is Carbonic anhydrase 7 (264 aa).

Positions 5-262 (HGWGYGQDDG…LKGRVVKASF (258 aa)) constitute an Alpha-carbonic anhydrase domain. His-66 (proton donor/acceptor) is an active-site residue. Zn(2+) is bound by residues His-96, His-98, and His-121. 201–202 (TT) contacts substrate.

The protein belongs to the alpha-carbonic anhydrase family. Zn(2+) is required as a cofactor.

Its subcellular location is the cytoplasm. The catalysed reaction is hydrogencarbonate + H(+) = CO2 + H2O. With respect to regulation, activated by histamine, L-adrenaline, L- and D-histidine, and L- and D-phenylalanine. Inhibited by coumarins, sulfonamide derivatives such as acetazolamide (AZA), by saccharin and Foscarnet (phosphonoformate trisodium salt). Reversible hydration of carbon dioxide. In Homo sapiens (Human), this protein is Carbonic anhydrase 7 (CA7).